A 370-amino-acid chain; its full sequence is 5-hydroxytryptamine receptor 5B (370 aa).

A disordered region spans residues 1–36 (MEVSNLSGATPGIAFPPGPESCSDSPSSGRSMGSTP). Residues 1–48 (MEVSNLSGATPGIAFPPGPESCSDSPSSGRSMGSTPGGLILSGREPPF) lie on the Extracellular side of the membrane. N-linked (GlcNAc...) asparagine glycosylation occurs at Asn-5. Positions 20–36 (ESCSDSPSSGRSMGSTP) are enriched in low complexity. Residues 49-75 (SAFTVLVVTLLVLLIAATFLWNLLVLV) traverse the membrane as a helical segment. Residues 76 to 88 (TILRVRAFHRVPH) are Cytoplasmic-facing. Residues 89-115 (NLVASTAVSDVLVAALVMPLSLVSELS) traverse the membrane as a helical segment. Residues 116–127 (AGRRWQLGRSLC) lie on the Extracellular side of the membrane. Cys-127 and Cys-205 form a disulfide bridge. Residues 128–150 (HVWISFDVLCCTASIWNVAAIAL) traverse the membrane as a helical segment. Asp-134 serves as a coordination point for serotonin. Residues 151 to 168 (DRYWTITRHLQYTLRTRR) lie on the Cytoplasmic side of the membrane. Residues 169–189 (RASALMIAITWALSALIALAP) traverse the membrane as a helical segment. Residues 190–211 (LLFGWGEAYDARLQRCQVSQEP) lie on the Extracellular side of the membrane. The helical transmembrane segment at 212–233 (SYAVFSTCGAFYVPLAVVLFVY) threads the bilayer. At 234 to 300 (WKIYKAAKFR…QKEKRAAMMV (67 aa)) the chain is on the cytoplasmic side. Residues 301 to 325 (GILIGVFVLCWIPFFLTELVSPLCA) traverse the membrane as a helical segment. The Extracellular segment spans residues 326 to 327 (CS). A helical membrane pass occupies residues 328-352 (LPPIWKSIFLWLGYSNSFFNPLIYT). The Cytoplasmic portion of the chain corresponds to 353 to 370 (AFNKNYNNAFKSLFTKQR).

The protein belongs to the G-protein coupled receptor 1 family. As to expression, brain; in the CA1 region of hippocampus, the medial habenula, and raphe nuclei.

Its subcellular location is the cell membrane. G-protein coupled receptor for 5-hydroxytryptamine (serotonin), a biogenic hormone that functions as a neurotransmitter, a hormone and a mitogen. Also functions as a receptor for ergot alkaloid derivatives and other psychoactive substances. Ligand binding causes a conformation change that triggers signaling via guanine nucleotide-binding proteins (G proteins) and modulates the activity of downstream effectors. Htr5b is coupled to G(i)/G(o) G alpha proteins and mediates inhibitory neurotransmission: signaling inhibits adenylate cyclase activity and activates a phosphatidylinositol-calcium second messenger system that regulates the release of Ca(2+) ions from intracellular stores. The chain is 5-hydroxytryptamine receptor 5B from Rattus norvegicus (Rat).